The sequence spans 181 residues: uncharacterized protein (181 aa).

The first 19 residues, 1–19 (MRRLLACSAGVLCFSQLGA), serve as a signal peptide directing secretion.

This is an uncharacterized protein from Treponema pallidum (strain Nichols).